Here is a 376-residue protein sequence, read N- to C-terminus: Glucose-1-phosphate adenylyltransferase (376 aa).

Alpha-D-glucose 1-phosphate is bound by residues Tyr101, Gly166, 181 to 182 (EK), and Ser192.

The protein belongs to the bacterial/plant glucose-1-phosphate adenylyltransferase family. Homotetramer.

The catalysed reaction is alpha-D-glucose 1-phosphate + ATP + H(+) = ADP-alpha-D-glucose + diphosphate. The protein operates within glycan biosynthesis; glycogen biosynthesis. Functionally, involved in the biosynthesis of ADP-glucose, a building block required for the elongation reactions to produce glycogen. Catalyzes the reaction between ATP and alpha-D-glucose 1-phosphate (G1P) to produce pyrophosphate and ADP-Glc. This chain is Glucose-1-phosphate adenylyltransferase, found in Bacillus cereus (strain Q1).